The chain runs to 146 residues: Bifunctional adenosine 5'-phosphosulfate phosphorylase/adenylylsulfatase HINT4 (146 aa).

Residues 9–120 (IFCEIVRNPT…YVPRWKAIKY (112 aa)) enclose the HIT domain. A Histidine triad motif motif is present at residues 101-105 (HLHLH). His105 functions as the Tele-AMP-histidine intermediate in the catalytic mechanism.

As to quaternary structure, homodimer.

The protein resides in the peroxisome. It carries out the reaction sulfate + ADP + H(+) = adenosine 5'-phosphosulfate + phosphate. The enzyme catalyses adenosine 5'-phosphosulfate + H2O = sulfate + AMP + 2 H(+). With respect to regulation, the adenosine 5'-phosphosulfate phosphorylase activity is enhanced at low pH. Its function is as follows. Possesses adenylylsulfatase activity in vitro, releasing AMP and sulfate from adenylyl sulfate. Also possesses adenosine 5'-phosphosulfate (APS) phosphorylase activity in vitro. Catalyzes the phosphorolysis of APS, leading to ADP and sulfate. This is Bifunctional adenosine 5'-phosphosulfate phosphorylase/adenylylsulfatase HINT4 from Arabidopsis thaliana (Mouse-ear cress).